The following is a 71-amino-acid chain: MTKYLVEICTFHGPTRQRRWHRVHQGGSRVECQRWVEELVAVFPTEEEARRSFGLTRERARQVYRIRGVRA.

The sequence is that of 8.6 kDa protein from Pseudomonas phage Pf1 (Bacteriophage Pf1).